The following is a 393-amino-acid chain: Dual specificity mitogen-activated protein kinase kinase 1 (393 aa).

Positions 1-27 (MPKKKPTPIQLNPAPDGSAVNGTSSAE) are disordered. The Protein kinase domain occupies 68 to 361 (FEKISELGAG…LKQLMVHAFI (294 aa)). ATP-binding positions include 74–82 (LGAGNGGVV) and K97. The active-site Proton acceptor is D190. 2 positions are modified to phosphoserine; by RAF: S218 and S222. Residues 270–307 (ELELMFGCQVEGDAAETPPRPRTPGRPLSSYGMDSRPP) are RAF1-binding. At T286 the chain carries Phosphothreonine. T292 is modified (phosphothreonine; by MAPK1). S298 carries the post-translational modification Phosphoserine; by PAK.

Belongs to the protein kinase superfamily. STE Ser/Thr protein kinase family. MAP kinase kinase subfamily. In terms of assembly, found in a complex with at least BRAF, HRAS, MAP2K1, MAPK3/ERK1 and RGS14. Forms a heterodimer with MAP2K2/MEK2. Forms heterodimers with KSR2 which further dimerize to form tetramers. Interacts with KSR1 or KSR2 and BRAF; the interaction with KSR1 or KSR2 mediates KSR1-BRAF or KSR2-BRAF dimerization. Interacts with ARBB2, LAMTOR3, MAPK1/ERK2 and RAF1. Interacts with MAPK1/ERK2. Interacts with MORG1. Interacts with PPARG. Interacts with SGK1. Interacts with BIRC6/bruce. Interacts with KAT7; the interaction promotes KAT7 phosphorylation. Interacts with RAF1 and NEK10; the interaction is required for ERK1/2-signaling pathway activation in response to UV irradiation. Interacts with TRAF3IP3. Interacts with MOS. In terms of processing, phosphorylation at Ser-218 and Ser-222 by MAP kinase kinase kinases (RAF or MEKK1) positively regulates the kinase activity. Also phosphorylated at Thr-292 by MAPK1/ERK2 and at Ser-298 by PAK. MAPK1/ERK2 phosphorylation of Thr-292 occurs in response to cellular adhesion and leads to inhibition of Ser-298 phosphorylation by PAK. Autophosphorylated at Ser-218 and Ser-222, autophosphosphorylation is promoted by NEK10 following UV irradiation.

Its subcellular location is the cytoplasm. The protein resides in the cytoskeleton. The protein localises to the microtubule organizing center. It is found in the centrosome. It localises to the spindle pole body. Its subcellular location is the nucleus. The protein resides in the membrane. It carries out the reaction L-seryl-[protein] + ATP = O-phospho-L-seryl-[protein] + ADP + H(+). It catalyses the reaction L-threonyl-[protein] + ATP = O-phospho-L-threonyl-[protein] + ADP + H(+). The enzyme catalyses L-tyrosyl-[protein] + ATP = O-phospho-L-tyrosyl-[protein] + ADP + H(+). Its activity is regulated as follows. Ras proteins such as HRAS mediate the activation of RAF proteins such as RAF1 or BRAF which in turn activate extracellular signal-regulated kinases (ERK) through MAPK (mitogen-activated protein kinases) and ERK kinases MAP2K1/MEK1 and MAP2K2/MEK2. Activation occurs through phosphorylation of Ser-218 and Ser-222. MAP2K1/MEK1 binds KSR1 or KSR2 releasing the inhibitory intramolecular interaction between KSR1 or KSR2 protein kinase and N-terminal domains. This allows KSR1 or KSR2 dimerization with BRAF leading to BRAF activation and phosphorylation of MAP2K1. MAP2K1/MEK1 is also the target of negative feed-back regulation by its substrate kinases, such as MAPK1/ERK2. These phosphorylate MAP2K1/MEK1 on Thr-292, thereby facilitating dephosphorylation of the activating residues Ser-218 and Ser-222. Inhibited by serine/threonine phosphatase 2A. Its function is as follows. Dual specificity protein kinase which acts as an essential component of the MAP kinase signal transduction pathway. Binding of extracellular ligands such as growth factors, cytokines and hormones to their cell-surface receptors activates RAS and this initiates RAF1 activation. RAF1 then further activates the dual-specificity protein kinases MAP2K1/MEK1 and MAP2K2/MEK2. Both MAP2K1/MEK1 and MAP2K2/MEK2 function specifically in the MAPK/ERK cascade, and catalyze the concomitant phosphorylation of a threonine and a tyrosine residue in a Thr-Glu-Tyr sequence located in the extracellular signal-regulated kinases MAPK3/ERK1 and MAPK1/ERK2, leading to their activation and further transduction of the signal within the MAPK/ERK cascade. Activates BRAF in a KSR1 or KSR2-dependent manner; by binding to KSR1 or KSR2 releases the inhibitory intramolecular interaction between KSR1 or KSR2 protein kinase and N-terminal domains which promotes KSR1 or KSR2-BRAF dimerization and BRAF activation. Depending on the cellular context, this pathway mediates diverse biological functions such as cell growth, adhesion, survival and differentiation, predominantly through the regulation of transcription, metabolism and cytoskeletal rearrangements. One target of the MAPK/ERK cascade is peroxisome proliferator-activated receptor gamma (PPARG), a nuclear receptor that promotes differentiation and apoptosis. MAP2K1/MEK1 has been shown to export PPARG from the nucleus. The MAPK/ERK cascade is also involved in the regulation of endosomal dynamics, including lysosome processing and endosome cycling through the perinuclear recycling compartment (PNRC), as well as in the fragmentation of the Golgi apparatus during mitosis. This is Dual specificity mitogen-activated protein kinase kinase 1 (MAP2K1) from Oryctolagus cuniculus (Rabbit).